A 578-amino-acid chain; its full sequence is Transmembrane protein 121B (578 aa).

2 disordered regions span residues 1–84 (MRPA…ESLS) and 106–129 (AGPA…PTSS). 2 stretches are compositionally biased toward low complexity: residues 8 to 17 (PRSVSSASGS) and 44 to 53 (GDSSTSTSTS). The segment covering 54-67 (RGGGGGRRGGGGGS) has biased composition (gly residues). A Phosphoserine modification is found at Ser167. Residues 529 to 557 (RARGGYGAPPSAPPPPPPPPQGGSQLGHC) are disordered. A compositionally biased stretch (pro residues) spans 538–549 (PSAPPPPPPPPQ). Ser552 is subject to Phosphoserine.

This sequence belongs to the TMEM121 family. Widely expressed, especially in adult heart, brain, prostate, testes, peripherical blood leukocytes and fetal brain.

The protein is Transmembrane protein 121B of Homo sapiens (Human).